The sequence spans 156 residues: uncharacterized protein (156 aa).

The N-terminal stretch at 1–18 (MKKLLSIFLMAFSLNAFA) is a signal peptide. Residues 19-156 (QTNLADVQLK…AEQIRVFAEK (138 aa)) enclose the Thioredoxin domain. A disulfide bond links C54 and C57.

Belongs to the thioredoxin family.

This is an uncharacterized protein from Haemophilus influenzae (strain ATCC 51907 / DSM 11121 / KW20 / Rd).